A 442-amino-acid chain; its full sequence is DNA topoisomerase 6 subunit A3 (442 aa).

Positions 1 to 34 are disordered; that stretch reads MSEKKRRGGAGAGAASGSASKKPRVSTAASYAES. The 134-residue stretch at 91–224 folds into the Topo IIA-type catalytic domain; the sequence is QDSASVTSRI…LHVVASEKGV (134 aa). Y185 functions as the O-(5'-phospho-DNA)-tyrosine intermediate in the catalytic mechanism. The Mg(2+) site is built by E271 and D323.

Belongs to the TOP6A family. As to quaternary structure, homodimer. Heterotetramer of two TOP6A and two TOP6B subunits. Interacts with TOP6B. It depends on Mg(2+) as a cofactor. Highly expressed in flowers before pollination. Expressed in roots and shoots.

It localises to the nucleus. The enzyme catalyses ATP-dependent breakage, passage and rejoining of double-stranded DNA.. Its function is as follows. Component of the DNA topoisomerase VI involved in chromatin organization and progression of endoreduplication cycles. Relaxes both positive and negative superturns and exhibits a strong decatenase activity. May be involved in cell proliferation and stress tolerance. The sequence is that of DNA topoisomerase 6 subunit A3 from Oryza sativa subsp. indica (Rice).